We begin with the raw amino-acid sequence, 327 residues long: MTHSLRVIFAGTPEFAAAALAAIHEAGFPVPLVLTQPDRPAGRGMKLQASAVKRYALERGMAVAQPPSLRRAGKYPVEAVAALDLLHATPHDVMVVAAYGLLLPQEVLELPRHGCINIHASLLPRWRGAAPIHRAIEAGDAETGVTLMQMDAGLDTGAMLHEARVAIAPDDTTATLHDKLAAAGARLVVDALVELERTGALAATPQPADGVTYAEKIGKHEAALDWRKPAAALARQVRAFDPFPGGAGTLDGATLKLWAADAVPGRDDAAPGTIVDIGPDGVVIACGEGALRVTQLQKPGGKRLPAREFLAGAPLAVGQRFAPADAA.

Residue 121–124 (SLLP) coordinates (6S)-5,6,7,8-tetrahydrofolate.

This sequence belongs to the Fmt family.

It catalyses the reaction L-methionyl-tRNA(fMet) + (6R)-10-formyltetrahydrofolate = N-formyl-L-methionyl-tRNA(fMet) + (6S)-5,6,7,8-tetrahydrofolate + H(+). Its function is as follows. Attaches a formyl group to the free amino group of methionyl-tRNA(fMet). The formyl group appears to play a dual role in the initiator identity of N-formylmethionyl-tRNA by promoting its recognition by IF2 and preventing the misappropriation of this tRNA by the elongation apparatus. This Burkholderia pseudomallei (strain 1106a) protein is Methionyl-tRNA formyltransferase.